The primary structure comprises 207 residues: Large ribosomal subunit protein uL4 (207 aa).

A disordered region spans residues 52 to 77 (RGWADVSGGGRKPWRQKGTGRARAGS).

It belongs to the universal ribosomal protein uL4 family. As to quaternary structure, part of the 50S ribosomal subunit.

Functionally, one of the primary rRNA binding proteins, this protein initially binds near the 5'-end of the 23S rRNA. It is important during the early stages of 50S assembly. It makes multiple contacts with different domains of the 23S rRNA in the assembled 50S subunit and ribosome. Its function is as follows. Forms part of the polypeptide exit tunnel. The chain is Large ribosomal subunit protein uL4 from Moorella thermoacetica (strain ATCC 39073 / JCM 9320).